A 126-amino-acid polypeptide reads, in one-letter code: Large ribosomal subunit protein bL19 (126 aa).

This sequence belongs to the bacterial ribosomal protein bL19 family.

In terms of biological role, this protein is located at the 30S-50S ribosomal subunit interface and may play a role in the structure and function of the aminoacyl-tRNA binding site. This chain is Large ribosomal subunit protein bL19, found in Paracoccus denitrificans (strain Pd 1222).